The sequence spans 378 residues: Succinyl-diaminopimelate desuccinylase (378 aa).

His77 provides a ligand contact to Zn(2+). Residue Asp79 is part of the active site. Residue Asp108 coordinates Zn(2+). The active-site Proton acceptor is Glu138. Residues Glu139, Glu167, and His350 each coordinate Zn(2+).

It belongs to the peptidase M20A family. DapE subfamily. Homodimer. It depends on Zn(2+) as a cofactor. The cofactor is Co(2+).

It carries out the reaction N-succinyl-(2S,6S)-2,6-diaminopimelate + H2O = (2S,6S)-2,6-diaminopimelate + succinate. Its pathway is amino-acid biosynthesis; L-lysine biosynthesis via DAP pathway; LL-2,6-diaminopimelate from (S)-tetrahydrodipicolinate (succinylase route): step 3/3. Its function is as follows. Catalyzes the hydrolysis of N-succinyl-L,L-diaminopimelic acid (SDAP), forming succinate and LL-2,6-diaminopimelate (DAP), an intermediate involved in the bacterial biosynthesis of lysine and meso-diaminopimelic acid, an essential component of bacterial cell walls. The sequence is that of Succinyl-diaminopimelate desuccinylase from Erythrobacter litoralis (strain HTCC2594).